The following is a 277-amino-acid chain: Large ribosomal subunit protein uL2 (277 aa).

The tract at residues 222–277 is disordered; that stretch reads GVAMNPVDHPHGGGEGRTSGGRHPVSPWGKPTKGKRTRSNKATDKFIMRTRHQRKK.

The protein belongs to the universal ribosomal protein uL2 family. As to quaternary structure, part of the 50S ribosomal subunit. Forms a bridge to the 30S subunit in the 70S ribosome.

One of the primary rRNA binding proteins. Required for association of the 30S and 50S subunits to form the 70S ribosome, for tRNA binding and peptide bond formation. It has been suggested to have peptidyltransferase activity; this is somewhat controversial. Makes several contacts with the 16S rRNA in the 70S ribosome. The protein is Large ribosomal subunit protein uL2 of Bartonella tribocorum (strain CIP 105476 / IBS 506).